We begin with the raw amino-acid sequence, 145 residues long: Acidic phospholipase A2 S1-11 (145 aa).

The signal sequence occupies residues 1-19 (MYPAHLLVLLAVCVSLLGA). Residues 20-27 (SDMPPQPL) constitute a propeptide that is removed on maturation. Intrachain disulfides connect cysteine 38–cysteine 99, cysteine 54–cysteine 144, cysteine 56–cysteine 72, cysteine 71–cysteine 127, and cysteine 106–cysteine 118. Ca(2+)-binding residues include tyrosine 55, glycine 57, and glycine 59. The active site involves histidine 75. Ca(2+) is bound at residue aspartate 76. Aspartate 121 is an active-site residue.

This sequence belongs to the phospholipase A2 family. Group I subfamily. D49 sub-subfamily. Ca(2+) is required as a cofactor. Post-translationally, this enzyme lacks two of the seven disulfide bonds found in similar PLA2 proteins. Expressed by the venom gland.

The protein resides in the secreted. It carries out the reaction a 1,2-diacyl-sn-glycero-3-phosphocholine + H2O = a 1-acyl-sn-glycero-3-phosphocholine + a fatty acid + H(+). Snake venom phospholipase A2 (PLA2) that inhibits collagen-induced platelet aggregation. PLA2 catalyzes the calcium-dependent hydrolysis of the 2-acyl groups in 3-sn-phosphoglycerides. The sequence is that of Acidic phospholipase A2 S1-11 from Austrelaps superbus (Lowland copperhead snake).